The chain runs to 132 residues: Transcription antitermination protein NusB (132 aa).

It belongs to the NusB family.

Involved in transcription antitermination. Required for transcription of ribosomal RNA (rRNA) genes. Binds specifically to the boxA antiterminator sequence of the ribosomal RNA (rrn) operons. In Campylobacter jejuni subsp. jejuni serotype O:2 (strain ATCC 700819 / NCTC 11168), this protein is Transcription antitermination protein NusB.